Here is a 432-residue protein sequence, read N- to C-terminus: Lecithin-cholesterol acyltransferase-like 1 (432 aa).

Residues 7 to 29 (HYSVVIAILVVVTMTSMCQAVGS) form a helical membrane-spanning segment. Catalysis depends on serine 209, which acts as the Acyl-ester intermediate. Residues aspartate 374 and histidine 400 each act as charge relay system in the active site.

This sequence belongs to the AB hydrolase superfamily. Lipase family.

It is found in the membrane. This chain is Lecithin-cholesterol acyltransferase-like 1 (LCAT1), found in Arabidopsis thaliana (Mouse-ear cress).